The primary structure comprises 99 residues: Progonadoliberin-1 (99 aa).

The N-terminal stretch at 1 to 26 is a signal peptide; sequence MAAQTFALRLLLVGTLLGTLLGQGCC. Gln27 is subject to Pyrrolidone carboxylic acid. At Gly36 the chain carries Glycine amide.

It belongs to the GnRH family.

The protein localises to the secreted. Functionally, stimulates the secretion of gonadotropins. The chain is Progonadoliberin-1 (gnrh1) from Dicentrarchus labrax (European seabass).